Reading from the N-terminus, the 349-residue chain is Protein AMBP (349 aa).

The N-terminal stretch at 1-19 (MQGLGALFLLLTACLTLKA) is a signal peptide. 2 residues coordinate 3-hydroxy-L-kynurenine: cysteine 52 and lysine 110. A disulfide bridge links cysteine 90 with cysteine 187. N-linked (GlcNAc...) asparagine glycosylation occurs at asparagine 114. 3-hydroxy-L-kynurenine-binding residues include lysine 136 and lysine 148. A glycan (O-linked (Xyl...) (chondroitin sulfate) serine) is linked at serine 214. 6 cysteine pairs are disulfide-bonded: cysteine 230/cysteine 280, cysteine 239/cysteine 263, cysteine 255/cysteine 276, cysteine 286/cysteine 336, cysteine 295/cysteine 319, and cysteine 311/cysteine 332. BPTI/Kunitz inhibitor domains are found at residues 230–280 (CQLN…LQTC) and 286–336 (CNLP…KEYC). Asparagine 233 carries N-linked (GlcNAc...) asparagine glycosylation.

This sequence in the N-terminal section; belongs to the calycin superfamily. Lipocalin family. As to quaternary structure, monomer. Homodimer. In plasma, it occurs as a monomer or dimer and in covalently-linked complexes with immunoglobulin A (IgA), ALB/albumin and F2/prothrombin. Chromophore-bound alpha-1-microglobulin interacts with the constant region of immunoglobulin A. Chromophore-bound alpha-1-microglobulin interacts with ALB with molar ratio 2:1 and 1:1; this interaction does not prevent fatty acid binding to ALB. Interacts with F2/prothrombin (via N-terminus) with molar ratio 2:1 and 1:1; this interaction does not prevent the activation of prothrombin to thrombin. Interacts with NDUFAB1, a subunit of mitochondrial complex I. Interacts with FN1. I-alpha-I plasma protease inhibitors are assembled from one or two heavy chains (HC) and one light chain, bikunin. Inter-alpha-inhibitor (I-alpha-I) is composed of ITIH1/HC1, ITIH2/HC2 and bikunin, and pre-alpha-inhibitor (P-alpha-I) of ITIH3/HC3 and bikunin. Interacts with TNFAIP6 (via Link domain). In terms of assembly, monomer. Also occurs as a complex with tryptase in mast cells. The precursor is proteolytically processed into separately functioning proteins. In terms of processing, 3-hydroxykynurenine, an oxidized tryptophan metabolite that is common in biological fluids, reacts with Cys-53, Lys-111, Lys-137, and Lys-149 to form heterogeneous polycyclic chromophores including hydroxanthommatin. The reaction by alpha-1-microglobulin is autocatalytic; the human protein forms chromophore even when expressed in insect and bacterial cells. The chromophore can react with accessible cysteines forming non-reducible thioether cross-links with other molecules of alpha-1-microglobulin or with other proteins such as Ig alpha-1 chain C region 'Cys-352'. Post-translationally, heavy chains are interlinked with bikunin via a chondroitin 4-sulfate bridge to the C-terminal aspartate. Proteolytically cleaved by PRSS3 at Kunitz domain 2. Expressed by the liver and secreted in plasma.

It localises to the secreted. Its subcellular location is the endoplasmic reticulum. The protein localises to the cytoplasm. The protein resides in the cytosol. It is found in the cell membrane. It localises to the nucleus membrane. Its subcellular location is the mitochondrion inner membrane. The protein localises to the extracellular space. The protein resides in the extracellular matrix. Functionally, antioxidant and tissue repair protein with reductase, heme-binding and radical-scavenging activities. Removes and protects against harmful oxidants and repairs macromolecules in intravascular and extravascular spaces and in intracellular compartments. Intravascularly, plays a regulatory role in red cell homeostasis by preventing heme- and reactive oxygen species-induced cell damage. Binds and degrades free heme to protect fetal and adult red blood cells from hemolysis. Reduces extracellular methemoglobin, a Fe3+ (ferric) form of hemoglobin that cannot bind oxygen, back to the Fe2+ (ferrous) form deoxyhemoglobin, which has oxygen-carrying potential. Upon acute inflammation, inhibits oxidation of low-density lipoprotein particles by MPO and limits vascular damage. Extravascularly, protects from oxidation products formed on extracellular matrix structures and cell membranes. Catalyzes the reduction of carbonyl groups on oxidized collagen fibers and preserves cellular and extracellular matrix ultrastructures. Importantly, counteracts the oxidative damage at blood-placenta interface, preventing leakage of free fetal hemoglobin into the maternal circulation. Intracellularly, has a role in maintaining mitochondrial redox homeostasis. Bound to complex I of the respiratory chain of mitochondria, may scavenge free radicals and preserve mitochondrial ATP synthesis. Protects renal tubule epithelial cells from heme-induced oxidative damage to mitochondria. Reduces cytochrome c from Fe3+ (ferric) to the Fe2+ (ferrous) state through formation of superoxide anion radicals in the presence of ascorbate or NADH/NADPH electron donor cofactors, ascorbate being the preferred cofactor. Has a chaperone role in facilitating the correct folding of bikunin in the endoplasmic reticulum compartment. In terms of biological role, kunitz-type serine protease inhibitor and structural component of extracellular matrix with a role in extracellular space remodeling and cell adhesion. Among others, has antiprotease activity toward kallikrein, a protease involved in airway inflammation; inhibits GZMK/granzyme, a granule-stored serine protease involved in NK and T cell cytotoxic responses; and inhibits PLG/plasmin, a protease required for activation of matrix metalloproteinases. As part of I-alpha-I complex, provides for the heavy chains to be transferred from I-alpha-I complex to hyaluronan in the presence of TNFAIP6, in a dynamic process that releases free bikunin and remodels extracellular matrix proteoglycan structures. Free bikunin, but not its heavy chain-bound form, acts as a potent protease inhibitor in airway secretions. Part of hyaluronan-rich extracellular matrix that surrounds oocyte during cumulus oophorus expansion, an indispensable process for proper ovulation. Also inhibits calcium oxalate crystallization. Kunitz-type serine protease inhibitor. Has high catalytic efficiency for F10/blood coagulation factor Xa and may act as an anticoagulant by inhibiting prothrombin activation. Inhibits trypsin and mast cell CMA1/chymase and tryptase proteases. This Rattus norvegicus (Rat) protein is Protein AMBP (Ambp).